Here is a 379-residue protein sequence, read N- to C-terminus: Programmed cell death protein 2-like (379 aa).

This chain is Programmed cell death protein 2-like (PDCD2L), found in Gallus gallus (Chicken).